A 279-amino-acid polypeptide reads, in one-letter code: Isopentenyl-diphosphate delta-isomerase idi1 (279 aa).

Lysine 78 contributes to the substrate binding site. Residues histidine 82 and histidine 93 each contribute to the Mg(2+) site. In terms of domain architecture, Nudix hydrolase spans 91–249 (LLHRAFSVFL…GLKFTPWFKL (159 aa)). 2 residues coordinate substrate: glutamine 111 and lysine 116. Cysteine 128 is an active-site residue. Residue serine 129 coordinates substrate. A Nudix box motif is present at residues 129 to 162 (SHPLGIPGETGAELDAAVLGVKRAAQRKLDQELG). Positions 191 and 193 each coordinate Mg(2+). The active site involves glutamate 193.

The protein belongs to the IPP isomerase type 1 family. Mg(2+) is required as a cofactor.

The catalysed reaction is isopentenyl diphosphate = dimethylallyl diphosphate. Its pathway is isoprenoid biosynthesis; dimethylallyl diphosphate biosynthesis; dimethylallyl diphosphate from isopentenyl diphosphate: step 1/1. Its function is as follows. Isopentenyl-diphosphate delta-isomerase; part of the second module of ergosterol biosynthesis pathway that includes the middle steps of the pathway. Idi1 catalyzes the 1,3-allylic rearrangement of isopentenyl (IPP) to its highly electrophilic allylic isomer, dimethylallyl diphosphate (DMAPP). The second module is carried out in the vacuole and involves the formation of farnesyl diphosphate, which is also an important intermediate in the biosynthesis of ubiquinone, dolichol, heme and prenylated proteins. Activity by the mevalonate kinase erg12 (AFUA_4G07780) first converts mevalonate into 5-phosphomevalonate. 5-phosphomevalonate is then further converted to 5-diphosphomevalonate by the phosphomevalonate kinase erg8 (AFUA_5G10680). The diphosphomevalonate decarboxylase mvd1 (AFUA_4G07130) then produces isopentenyl diphosphate. The isopentenyl-diphosphate delta-isomerase idi1 (AFUA_6G11160) then catalyzes the 1,3-allylic rearrangement of the homoallylic substrate isopentenyl (IPP) to its highly electrophilic allylic isomer, dimethylallyl diphosphate (DMAPP). Finally the farnesyl diphosphate synthase erg20 (AFUA_5G02450) catalyzes the sequential condensation of isopentenyl pyrophosphate with dimethylallyl pyrophosphate, and then with the resultant geranylpyrophosphate to the ultimate product farnesyl pyrophosphate. This is Isopentenyl-diphosphate delta-isomerase idi1 from Aspergillus fumigatus (strain ATCC MYA-4609 / CBS 101355 / FGSC A1100 / Af293) (Neosartorya fumigata).